Reading from the N-terminus, the 133-residue chain is Probable non-specific lipid-transfer protein 2 (133 aa).

Positions 1-31 (MRTVSMAALVVIAAALAWTSSAEPAPAPAPG) are cleaved as a signal peptide. 4 cysteine pairs are disulfide-bonded: Cys-35-Cys-83, Cys-45-Cys-60, Cys-61-Cys-106, and Cys-81-Cys-121.

The protein belongs to the plant LTP family.

In terms of biological role, plant non-specific lipid-transfer proteins transfer phospholipids as well as galactolipids across membranes. May play a role in wax or cutin deposition in the cell walls of expanding epidermal cells and certain secretory tissues. The chain is Probable non-specific lipid-transfer protein 2 from Parietaria judaica (Pellitory-of-the-wall).